The following is a 418-amino-acid chain: 3-deoxy-D-manno-octulosonic acid transferase (418 aa).

The chain crosses the membrane as a helical; Signal-anchor span at residues 7-27 (FLSFLLLPIYFVIIFIRLLIG). Glutamate 60 serves as the catalytic Proton acceptor. Residues 264–265 (PR), 305–307 (FGE), and 330–333 (NILE) each bind CMP.

It belongs to the glycosyltransferase group 1 family. Glycosyltransferase 30 subfamily.

Its subcellular location is the cell inner membrane. The enzyme catalyses lipid IVA (E. coli) + CMP-3-deoxy-beta-D-manno-octulosonate = alpha-Kdo-(2-&gt;6)-lipid IVA (E. coli) + CMP + H(+). It participates in bacterial outer membrane biogenesis; LPS core biosynthesis. Functionally, involved in lipopolysaccharide (LPS) biosynthesis. Catalyzes the transfer of 3-deoxy-D-manno-octulosonate (Kdo) residue(s) from CMP-Kdo to lipid IV(A), the tetraacyldisaccharide-1,4'-bisphosphate precursor of lipid A. The sequence is that of 3-deoxy-D-manno-octulosonic acid transferase (waaA) from Rickettsia bellii (strain RML369-C).